Consider the following 228-residue polypeptide: Urease subunit gamma/beta (228 aa).

The interval 1 to 101 (MQLTERERDK…LVTVHDPIRG (101 aa)) is urease gamma. The tract at residues 102–228 (AASRRVAGEY…ARAAGFGGAQ (127 aa)) is urease beta.

This sequence in the N-terminal section; belongs to the urease gamma subunit family. In the C-terminal section; belongs to the urease beta subunit family. Heterohexamer of 3 UreC (alpha) and 3 UreAB (gamma/beta) subunits.

The protein resides in the cytoplasm. It catalyses the reaction urea + 2 H2O + H(+) = hydrogencarbonate + 2 NH4(+). It functions in the pathway nitrogen metabolism; urea degradation; CO(2) and NH(3) from urea (urease route): step 1/1. In Deinococcus radiodurans (strain ATCC 13939 / DSM 20539 / JCM 16871 / CCUG 27074 / LMG 4051 / NBRC 15346 / NCIMB 9279 / VKM B-1422 / R1), this protein is Urease subunit gamma/beta.